Reading from the N-terminus, the 261-residue chain is Imidazole glycerol phosphate synthase subunit HisF (261 aa).

Catalysis depends on residues Asp-11 and Asp-130.

Belongs to the HisA/HisF family. Heterodimer of HisH and HisF.

It is found in the cytoplasm. The enzyme catalyses 5-[(5-phospho-1-deoxy-D-ribulos-1-ylimino)methylamino]-1-(5-phospho-beta-D-ribosyl)imidazole-4-carboxamide + L-glutamine = D-erythro-1-(imidazol-4-yl)glycerol 3-phosphate + 5-amino-1-(5-phospho-beta-D-ribosyl)imidazole-4-carboxamide + L-glutamate + H(+). Its pathway is amino-acid biosynthesis; L-histidine biosynthesis; L-histidine from 5-phospho-alpha-D-ribose 1-diphosphate: step 5/9. Its function is as follows. IGPS catalyzes the conversion of PRFAR and glutamine to IGP, AICAR and glutamate. The HisF subunit catalyzes the cyclization activity that produces IGP and AICAR from PRFAR using the ammonia provided by the HisH subunit. The sequence is that of Imidazole glycerol phosphate synthase subunit HisF from Heliobacterium mobile (Heliobacillus mobilis).